A 1187-amino-acid polypeptide reads, in one-letter code: AT-rich interactive domain-containing protein 5B (1187 aa).

Lysine 130 participates in a covalent cross-link: Glycyl lysine isopeptide (Lys-Gly) (interchain with G-Cter in SUMO2). The segment at 251–279 is disordered; sequence RPRKKKPCPQRRDSFSGVKDSNNNSDGKA. Phosphoserine is present on serine 264. Residues 319–411 enclose the ARID domain; the sequence is RADEQAFLVA…LILPYERFIK (93 aa). Position 337 is an N6,N6-dimethyllysine (lysine 337). A disordered region spans residues 413–611; it reads EEDKPLPPIK…QPPLASQSEL (199 aa). Residue lysine 446 forms a Glycyl lysine isopeptide (Lys-Gly) (interchain with G-Cter in SUMO2) linkage. The span at 447-459 shows a compositional bias: basic and acidic residues; sequence HEIPKSKKEKENA. The segment covering 460-469 has biased composition (low complexity); it reads PKPQESPEVS. Residues lysine 494 and lysine 496 each participate in a glycyl lysine isopeptide (Lys-Gly) (interchain with G-Cter in SUMO2) cross-link. Residues 512-522 show a composition bias toward basic and acidic residues; it reads ADPEKDSDADR. Over residues 527–537 the composition is skewed to low complexity; sequence ATAAEEAGEQG. Residues lysine 767, lysine 774, lysine 803, lysine 810, lysine 893, lysine 916, lysine 920, lysine 935, lysine 988, lysine 1000, and lysine 1013 each participate in a glycyl lysine isopeptide (Lys-Gly) (interchain with G-Cter in SUMO2) cross-link. The disordered stretch occupies residues 891–977; it reads DKKPAPAEAP…YPEPLSRASR (87 aa). The residue at position 1032 (serine 1032) is a Phosphoserine. Residues 1032–1065 are disordered; sequence SPLDPPKEACGKDKGAELEGEGGKAAAAHGGPAA. Residues 1036–1048 show a composition bias toward basic and acidic residues; it reads PPKEACGKDKGAE. Residues lysine 1055 and lysine 1069 each participate in a glycyl lysine isopeptide (Lys-Gly) (interchain with G-Cter in SUMO2) cross-link. Residues 1055 to 1065 show a composition bias toward low complexity; it reads KAAAAHGGPAA. Serine 1132 carries the phosphoserine modification.

Belongs to the ARID5B family. In terms of processing, methylation at Lys-337 prevents DNA-binding. Demethylation by PHF2 promotes recruitment of the PHF2-ARID5B complex to promoters.

It is found in the nucleus. Transcription coactivator that binds to the 5'-AATA[CT]-3' core sequence and plays a key role in adipogenesis and liver development. Acts by forming a complex with phosphorylated PHF2, which mediates demethylation at Lys-337, leading to target the PHF2-ARID5B complex to target promoters, where PHF2 mediates demethylation of dimethylated 'Lys-9' of histone H3 (H3K9me2), followed by transcription activation of target genes. The PHF2-ARID5B complex acts as a coactivator of HNF4A in liver. Required for adipogenesis: regulates triglyceride metabolism in adipocytes by regulating expression of adipogenic genes. Overexpression leads to induction of smooth muscle marker genes, suggesting that it may also act as a regulator of smooth muscle cell differentiation and proliferation. The protein is AT-rich interactive domain-containing protein 5B (ARID5B) of Canis lupus familiaris (Dog).